A 620-amino-acid chain; its full sequence is Chaperone protein DnaK (620 aa).

Thr197 bears the Phosphothreonine; by autocatalysis mark. The disordered stretch occupies residues 591-620 (AQKLGEAMANKNNAEQPKKKDDDVIDAEVE).

The protein belongs to the heat shock protein 70 family.

Its function is as follows. Acts as a chaperone. This Helicobacter pylori (strain HPAG1) protein is Chaperone protein DnaK.